The following is a 182-amino-acid chain: Pyruvoyl-dependent arginine decarboxylase (182 aa).

S44 is modified (pyruvic acid (Ser)).

It belongs to the PdaD family. Pyruvate serves as cofactor.

The catalysed reaction is L-arginine + H(+) = agmatine + CO2. The chain is Pyruvoyl-dependent arginine decarboxylase from Picrophilus torridus (strain ATCC 700027 / DSM 9790 / JCM 10055 / NBRC 100828 / KAW 2/3).